The following is a 499-amino-acid chain: MASTTTCTRFTDEYQLFEELGKGAFSVVRRCMKIPTGQEYAAKIINTKKLSARDHQKLEREARICRLLKHPNIVRLHDSISEEGFHYLVFDLVTGGELFEDIVAREYYSEADASHCIQQILESVNHCHLNGIVHRDLKPENLLLASKSKGAAVKLADFGLAIEVQGDQQAWFGFAGTPGYLSPEVLRKDPYGKPVDMWACGVILYILLVGYPPFWDEDQHRLYQQIKAGAYDFPSPEWDTVTPEAKDLINKMLTINPAKRITASEALKHPWICQRSTVASMMHRQETVDCLKKFNARRKLKGAILTTMLATRNFSAAKSLLKKPDGVKESTESSNTTIEDEDVKARKQEIIKVTEQLIEAINNGDFEAYTKICDPGLTAFEPEALGNLVEGMDFHRFYFENALSKSNKPIHTIILNPHVHLVGDDAACIAYIRLTQYMDGSGMPKTMQSEETRVWHRRDGKWQNVHFHRSGSPTVPIKPPCIPNGKENFSGGTSLWQNI.

At Ala2 the chain carries N-acetylalanine. A Protein kinase domain is found at 14 to 272 (YQLFEELGKG…ASEALKHPWI (259 aa)). Residues 20–28 (LGKGAFSVV) and Lys43 contribute to the ATP site. Asp136 acts as the Proton acceptor in catalysis. The tract at residues 283 to 292 (HRQETVDCLK) is autoinhibitory domain. Thr287 carries the post-translational modification Phosphothreonine; by autocatalysis. The tract at residues 291-301 (LKKFNARRKLK) is calmodulin-binding. Thr306 and Thr307 each carry phosphothreonine; by autocatalysis. A Phosphoserine modification is found at Ser315. Lys318 is modified (N6-acetyllysine). Phosphoserine is present on residues Ser319 and Ser330. Phosphothreonine is present on Thr331. Ser333 is modified (phosphoserine). A phosphothreonine mark is found at Thr336 and Thr337. Residues Ser404, Ser490, and Ser494 each carry the phosphoserine modification.

Belongs to the protein kinase superfamily. CAMK Ser/Thr protein kinase family. CaMK subfamily. CAMK2 is composed of 4 different chains: alpha (CAMK2A), beta (CAMK2B), gamma (CAMK2G), and delta (CAMK2D). The different isoforms assemble into homo- or heteromultimeric holoenzymes composed of 12 subunits with two hexameric rings stacked one on top of the other. Interacts with RRAD and CACNB2. Autophosphorylation of Thr-287 following activation by Ca(2+)/calmodulin. Phosphorylation of Thr-287 locks the kinase into an activated state. In terms of tissue distribution, expressed in cardiac muscle and skeletal muscle. Isoform Delta 3, isoform Delta 2, isoform Delta 8 and isoform Delta 9 are expressed in cardiac muscle. Isoform Delta 11 is expressed in skeletal muscle.

The protein resides in the cell membrane. It localises to the sarcolemma. The protein localises to the sarcoplasmic reticulum membrane. It catalyses the reaction L-seryl-[protein] + ATP = O-phospho-L-seryl-[protein] + ADP + H(+). The enzyme catalyses L-threonyl-[protein] + ATP = O-phospho-L-threonyl-[protein] + ADP + H(+). With respect to regulation, activated by Ca(2+)/calmodulin. Binding of calmodulin results in conformational change that relieves intrasteric autoinhibition and allows autophosphorylation of Thr-287 which turns the kinase in a constitutively active form and confers to the kinase a Ca(2+)-independent activity. In terms of biological role, calcium/calmodulin-dependent protein kinase involved in the regulation of Ca(2+) homeostatis and excitation-contraction coupling (ECC) in heart by targeting ion channels, transporters and accessory proteins involved in Ca(2+) influx into the myocyte, Ca(2+) release from the sarcoplasmic reticulum (SR), SR Ca(2+) uptake and Na(+) and K(+) channel transport. Targets also transcription factors and signaling molecules to regulate heart function. In its activated form, is involved in the pathogenesis of dilated cardiomyopathy and heart failure. Contributes to cardiac decompensation and heart failure by regulating SR Ca(2+) release via direct phosphorylation of RYR2 Ca(2+) channel on 'Ser-2808'. In the nucleus, phosphorylates the MEF2 repressor HDAC4, promoting its nuclear export and binding to 14-3-3 protein, and expression of MEF2 and genes involved in the hypertrophic program. Is essential for left ventricular remodeling responses to myocardial infarction. In pathological myocardial remodeling acts downstream of the beta adrenergic receptor signaling cascade to regulate key proteins involved in ECC. Regulates Ca(2+) influx to myocytes by binding and phosphorylating the L-type Ca(2+) channel subunit beta-2 CACNB2. In addition to Ca(2+) channels, can target and regulate the cardiac sarcolemmal Na(+) channel Nav1.5/SCN5A and the K+ channel Kv4.3/KCND3, which contribute to arrhythmogenesis in heart failure. Phosphorylates phospholamban (PLN/PLB), an endogenous inhibitor of SERCA2A/ATP2A2, contributing to the enhancement of SR Ca(2+) uptake that may be important in frequency-dependent acceleration of relaxation (FDAR) and maintenance of contractile function during acidosis. May participate in the modulation of skeletal muscle function in response to exercise, by regulating SR Ca(2+) transport through phosphorylation of PLN/PLB and triadin, a ryanodine receptor-coupling factor. In response to interferon-gamma (IFN-gamma) stimulation, catalyzes phosphorylation of STAT1, stimulating the JAK-STAT signaling pathway. The polypeptide is Calcium/calmodulin-dependent protein kinase type II subunit delta (CAMK2D) (Homo sapiens (Human)).